The primary structure comprises 179 residues: MDKHGIIESLLYTAGDEGLDEKQLLEILEINQAKLSELISSYTSSGLIIQKFGSTYILTSKKEASPYIEQLIEQKSNMKLSQAAMETLSIIAYNQPLSRSDIELIRGINSDGAVRTLIARGLIEAKDVENSRSHALQTTDLFLNVFGIEKIEDLPTTEEDEEEMDDFFSNLVNQKGDTK.

It belongs to the ScpB family. As to quaternary structure, homodimer. Homodimerization may be required to stabilize the binding of ScpA to the Smc head domains. Component of a cohesin-like complex composed of ScpA, ScpB and the Smc homodimer, in which ScpA and ScpB bind to the head domain of Smc. The presence of the three proteins is required for the association of the complex with DNA.

It localises to the cytoplasm. Participates in chromosomal partition during cell division. May act via the formation of a condensin-like complex containing Smc and ScpA that pull DNA away from mid-cell into both cell halves. The polypeptide is Segregation and condensation protein B (Staphylococcus haemolyticus (strain JCSC1435)).